The sequence spans 136 residues: Large ribosomal subunit protein uL16 (136 aa).

This sequence belongs to the universal ribosomal protein uL16 family. Part of the 50S ribosomal subunit.

In terms of biological role, binds 23S rRNA and is also seen to make contacts with the A and possibly P site tRNAs. This chain is Large ribosomal subunit protein uL16, found in Edwardsiella ictaluri (strain 93-146).